The following is a 359-amino-acid chain: tRNA-specific 2-thiouridylase MnmA (359 aa).

Residues 9 to 16 and methionine 35 each bind ATP; that span reads GMSGGVDS. The active-site Nucleophile is cysteine 105. A disulfide bridge connects residues cysteine 105 and cysteine 203. Glycine 129 is a binding site for ATP. The tract at residues 153 to 155 is interaction with tRNA; the sequence is KDQ. The Cysteine persulfide intermediate role is filled by cysteine 203. The interval 309–310 is interaction with tRNA; sequence RY.

It belongs to the MnmA/TRMU family.

It is found in the cytoplasm. It catalyses the reaction S-sulfanyl-L-cysteinyl-[protein] + uridine(34) in tRNA + AH2 + ATP = 2-thiouridine(34) in tRNA + L-cysteinyl-[protein] + A + AMP + diphosphate + H(+). Catalyzes the 2-thiolation of uridine at the wobble position (U34) of tRNA, leading to the formation of s(2)U34. This chain is tRNA-specific 2-thiouridylase MnmA, found in Acetivibrio thermocellus (strain ATCC 27405 / DSM 1237 / JCM 9322 / NBRC 103400 / NCIMB 10682 / NRRL B-4536 / VPI 7372) (Clostridium thermocellum).